The chain runs to 83 residues: Subtilisin-chymotrypsin inhibitor CI-1B (83 aa).

The interval 1–28 (MRSMEGSVPKYPEPTEGSIGASGAKRSW) is disordered.

The protein belongs to the protease inhibitor I13 (potato type I serine protease inhibitor) family.

Its function is as follows. Inhibits both subtilisin and chymotrypsin. In Hordeum vulgare (Barley), this protein is Subtilisin-chymotrypsin inhibitor CI-1B.